A 337-amino-acid polypeptide reads, in one-letter code: UDP-3-O-acylglucosamine N-acyltransferase 2 (337 aa).

The active-site Proton acceptor is H238.

Belongs to the transferase hexapeptide repeat family. LpxD subfamily. Homotrimer.

It carries out the reaction a UDP-3-O-[(3R)-3-hydroxyacyl]-alpha-D-glucosamine + a (3R)-hydroxyacyl-[ACP] = a UDP-2-N,3-O-bis[(3R)-3-hydroxyacyl]-alpha-D-glucosamine + holo-[ACP] + H(+). The protein operates within bacterial outer membrane biogenesis; LPS lipid A biosynthesis. Catalyzes the N-acylation of UDP-3-O-acylglucosamine using 3-hydroxyacyl-ACP as the acyl donor. Is involved in the biosynthesis of lipid A, a phosphorylated glycolipid that anchors the lipopolysaccharide to the outer membrane of the cell. This Francisella tularensis subsp. tularensis (strain FSC 198) protein is UDP-3-O-acylglucosamine N-acyltransferase 2.